Reading from the N-terminus, the 245-residue chain is Ribonuclease 3 (245 aa).

The 129-residue stretch at 18 to 146 (LSEFLENLSI…FVGAIYLDSG (129 aa)) folds into the RNase III domain. E59 is a Mg(2+) binding site. Residue D63 is part of the active site. Residues D132 and E135 each contribute to the Mg(2+) site. Residue E135 is part of the active site. The DRBM domain maps to 173 to 242 (DYKSLLQEYV…AEVALKAMED (70 aa)).

This sequence belongs to the ribonuclease III family. As to quaternary structure, homodimer. Requires Mg(2+) as cofactor.

It is found in the cytoplasm. It catalyses the reaction Endonucleolytic cleavage to 5'-phosphomonoester.. Functionally, digests double-stranded RNA. Involved in the processing of primary rRNA transcript to yield the immediate precursors to the large and small rRNAs (23S and 16S). Processes some mRNAs, and tRNAs when they are encoded in the rRNA operon. Processes pre-crRNA and tracrRNA of type II CRISPR loci if present in the organism. The sequence is that of Ribonuclease 3 from Borreliella afzelii (strain PKo) (Borrelia afzelii).